A 112-amino-acid chain; its full sequence is ATP synthase epsilon chain (112 aa).

Belongs to the ATPase epsilon chain family. F-type ATPases have 2 components, CF(1) - the catalytic core - and CF(0) - the membrane proton channel. CF(1) has five subunits: alpha(3), beta(3), gamma(1), delta(1), epsilon(1). CF(0) has three main subunits: a, b and c.

It is found in the cell inner membrane. Produces ATP from ADP in the presence of a proton gradient across the membrane. This is ATP synthase epsilon chain from Rickettsia rickettsii (strain Sheila Smith).